The sequence spans 329 residues: Ankyrin repeat and SOCS box protein 5 (329 aa).

ANK repeat units lie at residues 69 to 98, 102 to 131, 135 to 164, 167 to 196, 200 to 229, and 232 to 261; these read ADRS…NVNA, DHVT…NVNA, DGVT…KAQL, CLPS…DVDQ, HLGT…DVQK, and YWDT…DINA. An SOCS box domain is found at 278–329; the sequence is MVERILLQHEATPSSLYQLCRLCIRSYIGKPRLHLIPQLQLPTLLKNFLQYR.

This sequence belongs to the ankyrin SOCS box (ASB) family.

Its pathway is protein modification; protein ubiquitination. May be a substrate-recognition component of a SCF-like ECS (Elongin-Cullin-SOCS-box protein) E3 ubiquitin-protein ligase complex which mediates the ubiquitination and subsequent proteasomal degradation of target proteins. May play a role in the initiation of arteriogenesis. The polypeptide is Ankyrin repeat and SOCS box protein 5 (ASB5) (Homo sapiens (Human)).